The following is a 445-amino-acid chain: Proline--tRNA ligase (445 aa).

It belongs to the class-II aminoacyl-tRNA synthetase family. ProS type 2 subfamily. Homodimer.

The protein resides in the cytoplasm. It carries out the reaction tRNA(Pro) + L-proline + ATP = L-prolyl-tRNA(Pro) + AMP + diphosphate. In terms of biological role, catalyzes the attachment of proline to tRNA(Pro) in a two-step reaction: proline is first activated by ATP to form Pro-AMP and then transferred to the acceptor end of tRNA(Pro). This Dinoroseobacter shibae (strain DSM 16493 / NCIMB 14021 / DFL 12) protein is Proline--tRNA ligase.